The following is a 194-amino-acid chain: MALCARAALLLGALQVLALPGAVAQETYAQGSPSGNHSVPLLTANVNVTENTTMQVVSNQTSQISTVKPSSVLPKNVTAATVRPATIKVSTPGVSPHVTPSASKSTPKTSASPNSTQTSASMTTTAHSSLLTSVTVSATTHPTKGKGSKFDAGSFVGGIVLTLGVLSILYIGCKMYYSRRGIRYRSIDEHDAII.

Residues 1 to 24 (MALCARAALLLGALQVLALPGAVA) form the signal peptide. Residues 25-151 (QETYAQGSPS…PTKGKGSKFD (127 aa)) lie on the Extracellular side of the membrane. N-linked (GlcNAc...) asparagine glycans are attached at residues asparagine 36, asparagine 47, asparagine 51, asparagine 59, asparagine 76, and asparagine 114. Residues 88–124 (KVSTPGVSPHVTPSASKSTPKTSASPNSTQTSASMTT) form a disordered region. A compositionally biased stretch (low complexity) spans 99–124 (TPSASKSTPKTSASPNSTQTSASMTT). A helical transmembrane segment spans residues 152–172 (AGSFVGGIVLTLGVLSILYIG). The Cytoplasmic segment spans residues 173–194 (CKMYYSRRGIRYRSIDEHDAII). Serine 186 is subject to Phosphoserine.

Belongs to the CD164 family.

Its subcellular location is the membrane. Implicated in oncotic cell death, characterized by cell swelling, organelle swelling, vacuolization and increased membrane permeability. This is Porimin (Tmem123) from Rattus norvegicus (Rat).